The sequence spans 146 residues: Mite group 2 allergen Der p 2 (146 aa).

A signal peptide spans 1 to 17 (MMYKILCLSLLVAAVAR). Cystine bridges form between Cys25-Cys136, Cys38-Cys44, and Cys90-Cys95.

Belongs to the NPC2 family.

Its subcellular location is the secreted. The chain is Mite group 2 allergen Der p 2 (DERP2) from Dermatophagoides pteronyssinus (European house dust mite).